A 486-amino-acid chain; its full sequence is Receptor-interacting serine/threonine-protein kinase 3 (486 aa).

Serine 2 is subject to Phosphoserine. One can recognise a Protein kinase domain in the interval 22–292 (LKKLEFVGKG…DCEPKTNEVY (271 aa)). ATP-binding positions include 28 to 36 (VGKGGFGVV) and lysine 51. Catalysis depends on aspartate 143, which acts as the Proton acceptor. Serine 165 is modified (phosphoserine). Position 187 is a phosphothreonine (threonine 187). Position 204 is a phosphoserine; by autocatalysis (serine 204). Residue threonine 231 is modified to Phosphothreonine; by autocatalysis. The residue at position 232 (serine 232) is a Phosphoserine; by autocatalysis. Threonine 257 is subject to Phosphothreonine. Residues serine 304 and serine 326 each carry the phosphoserine modification. The disordered stretch occupies residues 312–333 (QHRSSGRNLSAREPSQRGTEMD). Threonine 338 is subject to Phosphothreonine. Positions 349 to 388 (LEEPSGPVPGKCPERQAQDTSVGPATPARTSSDPVAGTPQ) are disordered. Serine 353, serine 369, and serine 380 each carry phosphoserine. A compositionally biased stretch (polar residues) spans 366–381 (QDTSVGPATPARTSSD). Position 392 is a phosphothreonine (threonine 392). The short motif at 440–461 (LVFNNCSEVQIGNYNSLVAPPR) is the RIP homotypic interaction motif (RHIM) element. The segment at 462–486 (TTASSSAKYDQAQFGRGRGWQPFHK) is disordered. Arginine 477 carries the post-translational modification Omega-N-methylarginine.

The protein belongs to the protein kinase superfamily. TKL Ser/Thr protein kinase family. Interacts (via RIP homotypic interaction motif) with RIPK1 (via RIP homotypic interaction motif); this interaction induces RIPK1 phosphorylation and formation of a RIPK1-RIPK3 necrosis-inducing complex. Interacts with MLKL; the interaction is direct and triggers necroptosis. Interacts with ZBP1 (via RIP homotypic interaction motif); interaction with ZBP1 activates RIPK3, triggering necroptosis. Upon TNF-induced necrosis, the RIPK1-RIPK3 dimer further interacts with PGAM5 and MLKL; the formation of this complex leads to PGAM5 phosphorylation and increase in PGAM5 phosphatase activity. Binds TRAF2 and is recruited to the TNFR-1 signaling complex. Interacts with PYGL, GLUL and GLUD1; these interactions result in activation of these metabolic enzymes. Interacts with BIRC2/c-IAP1, BIRC3/c-IAP2 and XIAP/BIRC4. Interacts with ARHGEF2. Interacts with PELI1 (via atypical FHA domain); the phosphorylated form at Thr-187 binds preferentially to PELI1. Interacts with BUB1B, TRAF2 and STUB1. Interacts with CASP6. Component of the AIM2 PANoptosome complex, a multiprotein complex that drives inflammatory cell death (PANoptosis). In terms of assembly, (Microbial infection) Interacts (via RIP homotypic interaction motif) with murid herpesvirus protein RIR1; this interaction disrupts RIP3-RIP1 interactions characteristic of TNF-alpha induced necroptosis, thereby suppressing this death pathway. RIPK1 and RIPK3 undergo reciprocal auto- and trans-phosphorylation. Autophosphorylated following interaction with ZBP1. Phosphorylation of Ser-204 plays a role in the necroptotic function of RIPK3. Autophosphorylates at Thr-231 and Ser-232 following activation by ZBP1: phosphorylation at these sites is a hallmark of necroptosis and is required for binding MLKL. Phosphorylation at Thr-187 is important for its kinase activity, interaction with PELI1 and for its ability to mediate TNF-induced necroptosis. In terms of processing, polyubiquitinated with 'Lys-48' and 'Lys-63'-linked chains by BIRC2/c-IAP1 and BIRC3/c-IAP2, leading to activation of NF-kappa-B. Ubiquitinated by STUB1 leading to its subsequent proteasome-dependent degradation. As to expression, expressed in embryo and in adult spleen, liver, testis, heart, brain and lung.

The protein resides in the cytoplasm. The protein localises to the cytosol. It is found in the nucleus. It catalyses the reaction L-seryl-[protein] + ATP = O-phospho-L-seryl-[protein] + ADP + H(+). It carries out the reaction L-threonyl-[protein] + ATP = O-phospho-L-threonyl-[protein] + ADP + H(+). Activity is stimulated by ZBP1, which senses double-stranded Z-RNA structures. RIPK3-dependent necroptosis is inhibited by RIPK1: RIPK1 prevents the ZBP1-induced activation of RIPK3 via FADD-mediated recruitment of CASP8, which cleaves RIPK1 and limits TNF-induced necroptosis. Inhibited by type II inhibitor 1-(4-fluorophenyl)-N-[3-fluoro-4-(1H-pyrrolo[2,3-b]pyridin-4-yloxy)phenyl]-2-oxo-1,2-dihydropyridine-3-carboxamide. Its function is as follows. Serine/threonine-protein kinase that activates necroptosis and apoptosis, two parallel forms of cell death. Necroptosis, a programmed cell death process in response to death-inducing TNF-alpha family members, is triggered by RIPK3 following activation by ZBP1. Activated RIPK3 forms a necrosis-inducing complex and mediates phosphorylation of MLKL, promoting MLKL localization to the plasma membrane and execution of programmed necrosis characterized by calcium influx and plasma membrane damage. In addition to TNF-induced necroptosis, necroptosis can also take place in the nucleus in response to orthomyxoviruses infection: following ZBP1 activation, which senses double-stranded Z-RNA structures, nuclear RIPK3 catalyzes phosphorylation and activation of MLKL, promoting disruption of the nuclear envelope and leakage of cellular DNA into the cytosol. Also regulates apoptosis: apoptosis depends on RIPK1, FADD and CASP8, and is independent of MLKL and RIPK3 kinase activity. Phosphorylates RIPK1: RIPK1 and RIPK3 undergo reciprocal auto- and trans-phosphorylation. In some cell types, also able to restrict viral replication by promoting cell death-independent responses. In response to flavivirus infection in neurons, promotes a cell death-independent pathway that restricts viral replication: together with ZBP1, promotes a death-independent transcriptional program that modifies the cellular metabolism via up-regulation expression of the enzyme ACOD1/IRG1 and production of the metabolite itaconate. Itaconate inhibits the activity of succinate dehydrogenase, generating a metabolic state in neurons that suppresses replication of viral genomes. RIPK3 binds to and enhances the activity of three metabolic enzymes: GLUL, GLUD1, and PYGL. These metabolic enzymes may eventually stimulate the tricarboxylic acid cycle and oxidative phosphorylation, which could result in enhanced ROS production. This is Receptor-interacting serine/threonine-protein kinase 3 from Mus musculus (Mouse).